We begin with the raw amino-acid sequence, 461 residues long: Cysteine--tRNA ligase (461 aa).

A Zn(2+)-binding site is contributed by cysteine 30. The 'HIGH' region motif lies at 32 to 42 (VTVYDLCHIGH). The Zn(2+) site is built by cysteine 211, histidine 236, and glutamate 240. Residues 268 to 272 (KMSKS) carry the 'KMSKS' region motif. Residue lysine 271 participates in ATP binding.

This sequence belongs to the class-I aminoacyl-tRNA synthetase family. In terms of assembly, monomer. It depends on Zn(2+) as a cofactor.

It localises to the cytoplasm. It carries out the reaction tRNA(Cys) + L-cysteine + ATP = L-cysteinyl-tRNA(Cys) + AMP + diphosphate. This Shewanella sp. (strain MR-4) protein is Cysteine--tRNA ligase.